Reading from the N-terminus, the 443-residue chain is Phosphoglucosamine mutase (443 aa).

The active-site Phosphoserine intermediate is the Ser101. The Mg(2+) site is built by Ser101, Asp240, Asp242, and Asp244. Ser101 carries the post-translational modification Phosphoserine.

The protein belongs to the phosphohexose mutase family. It depends on Mg(2+) as a cofactor. In terms of processing, activated by phosphorylation.

It carries out the reaction alpha-D-glucosamine 1-phosphate = D-glucosamine 6-phosphate. Catalyzes the conversion of glucosamine-6-phosphate to glucosamine-1-phosphate. The sequence is that of Phosphoglucosamine mutase from Psychromonas ingrahamii (strain DSM 17664 / CCUG 51855 / 37).